Reading from the N-terminus, the 113-residue chain is Hydrogenase maturation factor HybF (113 aa).

Ni(2+) is bound by residues histidine 2 and glutamate 3. Zn(2+)-binding residues include cysteine 73, cysteine 76, cysteine 89, and cysteine 92.

This sequence belongs to the HypA/HybF family. HybF subfamily.

In terms of biological role, involved in the maturation of [NiFe] hydrogenases. Required for nickel insertion into the metal center of the hydrogenase. The sequence is that of Hydrogenase maturation factor HybF from Proteus vulgaris.